A 1404-amino-acid chain; its full sequence is DNA-directed RNA polymerase subunit beta' (1404 aa).

Zn(2+)-binding residues include Cys72, Cys74, Cys87, and Cys90. Residues Asp462, Asp464, and Asp466 each contribute to the Mg(2+) site. Residues Cys816, Cys890, Cys897, and Cys900 each contribute to the Zn(2+) site.

Belongs to the RNA polymerase beta' chain family. As to quaternary structure, the RNAP catalytic core consists of 2 alpha, 1 beta, 1 beta' and 1 omega subunit. When a sigma factor is associated with the core the holoenzyme is formed, which can initiate transcription. The cofactor is Mg(2+). Zn(2+) serves as cofactor.

It catalyses the reaction RNA(n) + a ribonucleoside 5'-triphosphate = RNA(n+1) + diphosphate. In terms of biological role, DNA-dependent RNA polymerase catalyzes the transcription of DNA into RNA using the four ribonucleoside triphosphates as substrates. The sequence is that of DNA-directed RNA polymerase subunit beta' from Azoarcus sp. (strain BH72).